Here is a 301-residue protein sequence, read N- to C-terminus: Phosducin-like protein (301 aa).

Thr-2 carries the post-translational modification N-acetylthreonine. The interval 17-60 is disordered; sequence YSTSEDEDSDHEDKDRGRGAPAISSTPAEAELAGEGISINTGPK. Residues Ser-20, Ser-25, Ser-226, Ser-293, and Ser-296 each carry the phosphoserine modification. Residues 36–299 form the Phosducin domain; it reads APAISSTPAE…TCHSEDSDLE (264 aa). The interval 158–301 is thioredoxin fold; that stretch reads FKQVFEIPSG…HSEDSDLEID (144 aa).

It belongs to the phosducin family. In terms of assembly, forms a complex with the beta and gamma subunits of the GTP-binding protein, transducin. Interacts with the CCT chaperonin complex.

It is found in the cell projection. Its subcellular location is the cilium. In terms of biological role, functions as a co-chaperone for CCT in the assembly of heterotrimeric G protein complexes, facilitates the assembly of both Gbeta-Ggamma and RGS-Gbeta5 heterodimers. Also acts as a positive regulator of hedgehog signaling and regulates ciliary function. The sequence is that of Phosducin-like protein (Pdcl) from Mus musculus (Mouse).